A 1323-amino-acid chain; its full sequence is Traf2 and NCK-interacting protein kinase (1323 aa).

One can recognise a Protein kinase domain in the interval 25–289 (FELVELVGNG…TEQLMKHPFI (265 aa)). ATP is bound by residues 31 to 39 (VGNGTYGQV) and Lys-54. Asp-153 (proton acceptor) is an active-site residue. Thr-187 carries the phosphothreonine modification. Disordered stretches follow at residues 284–347 (MKHP…LPGE), 397–559 (EQKE…LRPV), and 571–838 (SQGP…NEQY). Positions 288 to 307 (FIRDQPNERQVRIQLKDHID) are enriched in basic and acidic residues. Residues 290-1010 (RDQPNERQVR…EIRKYKKRFN (721 aa)) are mediates interaction with NEDD4. Over residues 317-335 (DETEYEYSGSEEEEEENDS) the composition is skewed to acidic residues. Ser-324 and Ser-326 each carry phosphoserine. Basic and acidic residues-rich tracts occupy residues 397-470 (EQKE…ERDY), 477-494 (QRQE…HYKE), and 503-513 (AWAKEVEERSR). Phosphoserine occurs at positions 531 and 541. The residue at position 552 (Thr-552) is a Phosphothreonine. Phosphoserine occurs at positions 571, 579, 581, and 611. Positions 623–640 (RIEKFDRSSWLRQEEDIP) are enriched in basic and acidic residues. A phosphoserine mark is found at Ser-649, Ser-651, Ser-659, Ser-672, Ser-678, Ser-691, Ser-735, Ser-737, and Ser-740. The span at 691 to 726 (SSLQRTSSGSSSSSSTPSSQPSSQGGSQPGSQAGSS) shows a compositional bias: low complexity. 2 stretches are compositionally biased toward basic and acidic residues: residues 746–760 (EPSK…DITR) and 772–790 (KELR…KKVT). Acidic residues predominate over residues 797 to 810 (EESESSEEEEEDGE). Ser-922 carries the post-translational modification Phosphoserine. Residues 939-960 (FVDPRVYQTSPTDEDEEDDESS) are disordered. Over residues 950–959 (TDEDEEDDES) the composition is skewed to acidic residues. Positions 1010 to 1297 (NSEILCAALW…KFLCERNDKV (288 aa)) constitute a CNH domain.

The protein belongs to the protein kinase superfamily. STE Ser/Thr protein kinase family. STE20 subfamily. In terms of assembly, interacts (via the CNH domain) with RAP2A (GTP-bound form preferentially); the interaction is direct and required for the activation of TNIK by RAP2A. Interacts with NEDD4; recruits RAP2A to NEDD4. Interacts with TRAF2 and NCK. Interacts with TCF7L2/TCF4 and CTNNB1; the interaction is direct. Interacts with TANC1. Autophosphorylated. Autophosphorylation is activated by RAP2A and induces association to the cytoskeletal fraction.

It is found in the nucleus. The protein resides in the cytoplasm. Its subcellular location is the recycling endosome. The protein localises to the cytoskeleton. The catalysed reaction is L-seryl-[protein] + ATP = O-phospho-L-seryl-[protein] + ADP + H(+). The enzyme catalyses L-threonyl-[protein] + ATP = O-phospho-L-threonyl-[protein] + ADP + H(+). Its function is as follows. Serine/threonine kinase that acts as an essential activator of the Wnt signaling pathway. Recruited to promoters of Wnt target genes and required to activate their expression. May act by phosphorylating TCF4/TCF7L2. Appears to act upstream of the JUN N-terminal pathway. May play a role in the response to environmental stress. Part of a signaling complex composed of NEDD4, RAP2A and TNIK which regulates neuronal dendrite extension and arborization during development. More generally, it may play a role in cytoskeletal rearrangements and regulate cell spreading. Phosphorylates SMAD1 on Thr-322. Activator of the Hippo signaling pathway which plays a pivotal role in organ size control and tumor suppression by restricting proliferation and promoting apoptosis. MAP4Ks act in parallel to and are partially redundant with STK3/MST2 and STK4/MST2 in the phosphorylation and activation of LATS1/2, and establish MAP4Ks as components of the expanded Hippo pathway. The chain is Traf2 and NCK-interacting protein kinase (Tnik) from Mus musculus (Mouse).